Reading from the N-terminus, the 518-residue chain is Phytoene desaturase (neurosporene-forming) (518 aa).

14-47 (LVIGSGLGGLAAAMRLGAKGWRVTVIDKLDVPGG) contributes to the FAD binding site.

The protein belongs to the carotenoid/retinoid oxidoreductase family. It depends on FAD as a cofactor.

The catalysed reaction is 15-cis-phytoene + 3 A = all-trans-neurosporene + 3 AH2. It functions in the pathway carotenoid biosynthesis. In terms of biological role, converts phytoene into all-trans-neurosporene as the major product, via the intermediary of phytofluene and zeta-carotene, by the introduction of three double bonds. This is Phytoene desaturase (neurosporene-forming) (crtI) from Cereibacter sphaeroides (strain ATCC 17023 / DSM 158 / JCM 6121 / CCUG 31486 / LMG 2827 / NBRC 12203 / NCIMB 8253 / ATH 2.4.1.) (Rhodobacter sphaeroides).